Here is a 115-residue protein sequence, read N- to C-terminus: Large ribosomal subunit protein P2y (115 aa).

The segment at 63–115 (ASVPSGGGGGVAVASATSGGGGGGGASAAESKKEEKKEEKEESDDDMGFSLFE) is disordered. A compositionally biased stretch (basic and acidic residues) spans 92-102 (ESKKEEKKEEK). Ser-105 carries the post-translational modification Phosphoserine.

Belongs to the eukaryotic ribosomal protein P1/P2 family. In terms of assembly, P1 and P2 exist as dimers at the large ribosomal subunit. Post-translationally, phosphorylated.

Plays an important role in the elongation step of protein synthesis. The polypeptide is Large ribosomal subunit protein P2y (RPP2B) (Arabidopsis thaliana (Mouse-ear cress)).